Consider the following 93-residue polypeptide: Large ribosomal subunit protein bL31 (93 aa).

The segment at 72–93 is disordered; the sequence is VKTVSSNADNQKETTEELIKNK. The span at 81–93 shows a compositional bias: basic and acidic residues; sequence NQKETTEELIKNK.

This sequence belongs to the bacterial ribosomal protein bL31 family. Type A subfamily. As to quaternary structure, part of the 50S ribosomal subunit.

Its function is as follows. Binds the 23S rRNA. The protein is Large ribosomal subunit protein bL31 of Onion yellows phytoplasma (strain OY-M).